We begin with the raw amino-acid sequence, 208 residues long: MANHQIKAQRRKDEGKGASRRLRHAGMIPAIIYGGEQRPVSIQLNHEQIWLAQQNEWFYSSILDLNVDGGGGEKVLLRDLQRHPYRQLVMHVDFQRVSSDAKLSVAVPLHFINQATSPAGKASGVVITHELNEVHVSCLPKDLPEFIEVDLSTLSVGHVIHLSDITFPIGVELSTRLDKEHDMAVVIAKHVVIEDDTPAEEEGEGDTK.

Residues 1–20 are disordered; that stretch reads MANHQIKAQRRKDEGKGASR.

Belongs to the bacterial ribosomal protein bL25 family. CTC subfamily. As to quaternary structure, part of the 50S ribosomal subunit; part of the 5S rRNA/L5/L18/L25 subcomplex. Contacts the 5S rRNA. Binds to the 5S rRNA independently of L5 and L18.

This is one of the proteins that binds to the 5S RNA in the ribosome where it forms part of the central protuberance. This chain is Large ribosomal subunit protein bL25, found in Xylella fastidiosa (strain 9a5c).